We begin with the raw amino-acid sequence, 710 residues long: WD repeat-containing protein CG11141 (710 aa).

2 WD repeats span residues 31–70 (FFPA…MQKL) and 133–172 (LHKC…HLSK). Positions 283–307 (LNPKQRSEPSGTHHTSASTSSTRHS) are disordered. Low complexity predominate over residues 292 to 307 (SGTHHTSASTSSTRHS). Thr488 carries the phosphothreonine modification. Phosphoserine is present on Ser553. Disordered regions lie at residues 612–635 (ASIQ…GEPV) and 685–710 (DPLA…FLDN). 2 stretches are compositionally biased toward polar residues: residues 613 to 624 (SIQTSSRENATN) and 694 to 704 (PATSDSNTSSE).

This sequence belongs to the WD repeat KIAA0329 family.

The protein is WD repeat-containing protein CG11141 of Drosophila melanogaster (Fruit fly).